A 322-amino-acid polypeptide reads, in one-letter code: uncharacterized protein (322 aa).

This is an uncharacterized protein from Acanthamoeba polyphaga mimivirus (APMV).